Consider the following 186-residue polypeptide: Dynactin subunit 3 (186 aa).

Residue Ala2 is modified to N-acetylalanine. Residues 135-157 (QQQDQCVEITEESKALLEEYNKT) adopt a coiled-coil conformation.

This sequence belongs to the dynactin subunit 3 family. As to quaternary structure, subunit of dynactin, a multiprotein complex part of a tripartite complex with dynein and a adapter, such as BICDL1, BICD2 or HOOK3. The dynactin complex is built around ACTR1A/ACTB filament and consists of an actin-related filament composed of a shoulder domain, a pointed end and a barbed end. Its length is defined by its flexible shoulder domain. The soulder is composed of 2 DCTN1 subunits, 4 DCTN2 and 2 DCTN3. The 4 DCNT2 (via N-terminus) bind the ACTR1A filament and act as molecular rulers to determine the length. The pointed end is important for binding dynein-dynactin cargo adapters. Consists of 4 subunits: ACTR10, DCNT4, DCTN5 and DCTN6. The barbed end is composed of a CAPZA1:CAPZB heterodimers, which binds ACTR1A/ACTB filament and dynactin and stabilizes dynactin.

It localises to the cytoplasm. The protein resides in the cytoskeleton. It is found in the microtubule organizing center. Its subcellular location is the centrosome. The protein localises to the chromosome. It localises to the centromere. The protein resides in the kinetochore. It is found in the spindle. Its subcellular location is the cleavage furrow. The protein localises to the midbody. In terms of biological role, part of the dynactin complex that activates the molecular motor dynein for ultra-processive transport along microtubules. Together with dynein may be involved in spindle assembly and cytokinesis. In Bos taurus (Bovine), this protein is Dynactin subunit 3 (DCTN3).